The primary structure comprises 447 residues: Glutamyl-tRNA(Gln) amidotransferase subunit A (447 aa).

Active-site charge relay system residues include K51 and S126. S150 functions as the Acyl-ester intermediate in the catalytic mechanism.

Belongs to the amidase family. GatA subfamily. Heterotrimer of A, B and C subunits.

The catalysed reaction is L-glutamyl-tRNA(Gln) + L-glutamine + ATP + H2O = L-glutaminyl-tRNA(Gln) + L-glutamate + ADP + phosphate + H(+). Allows the formation of correctly charged Gln-tRNA(Gln) through the transamidation of misacylated Glu-tRNA(Gln) in organisms which lack glutaminyl-tRNA synthetase. The reaction takes place in the presence of glutamine and ATP through an activated gamma-phospho-Glu-tRNA(Gln). In Helicobacter hepaticus (strain ATCC 51449 / 3B1), this protein is Glutamyl-tRNA(Gln) amidotransferase subunit A.